The chain runs to 1131 residues: Kinesin-like protein CG14535 (1131 aa).

Polar residues predominate over residues Met-1–Arg-11. The tract at residues Met-1 to Pro-25 is disordered. A Kinesin motor domain is found at Lys-44–Leu-396. 4 disordered regions span residues Ala-472 to Lys-494, Asp-693 to Ile-753, Pro-905 to Leu-926, and Thr-1016 to Arg-1072. Over residues Ser-483–Lys-494 the composition is skewed to low complexity. Over residues Thr-1016–Arg-1032 the composition is skewed to polar residues.

The protein belongs to the TRAFAC class myosin-kinesin ATPase superfamily. Kinesin family. KIF26 subfamily.

The protein localises to the cytoplasm. It is found in the cytoskeleton. The chain is Kinesin-like protein CG14535 from Drosophila melanogaster (Fruit fly).